Here is a 603-residue protein sequence, read N- to C-terminus: Phosphomethylpyrimidine synthase (603 aa).

Substrate contacts are provided by residues Asn-224, Met-253, Tyr-282, His-318, Ser-338–Gly-340, Asp-379–Arg-382, and Glu-418. His-422 is a binding site for Zn(2+). Residue Tyr-445 participates in substrate binding. Residue His-486 participates in Zn(2+) binding. [4Fe-4S] cluster-binding residues include Cys-566, Cys-569, and Cys-574.

The protein belongs to the ThiC family. In terms of assembly, homodimer. It depends on [4Fe-4S] cluster as a cofactor.

The enzyme catalyses 5-amino-1-(5-phospho-beta-D-ribosyl)imidazole + S-adenosyl-L-methionine = 4-amino-2-methyl-5-(phosphooxymethyl)pyrimidine + CO + 5'-deoxyadenosine + formate + L-methionine + 3 H(+). The protein operates within cofactor biosynthesis; thiamine diphosphate biosynthesis. Its function is as follows. Catalyzes the synthesis of the hydroxymethylpyrimidine phosphate (HMP-P) moiety of thiamine from aminoimidazole ribotide (AIR) in a radical S-adenosyl-L-methionine (SAM)-dependent reaction. The sequence is that of Phosphomethylpyrimidine synthase from Xylella fastidiosa (strain Temecula1 / ATCC 700964).